A 210-amino-acid polypeptide reads, in one-letter code: Large ribosomal subunit protein uL3 (210 aa).

Belongs to the universal ribosomal protein uL3 family. As to quaternary structure, part of the 50S ribosomal subunit. Forms a cluster with proteins L14 and L19.

One of the primary rRNA binding proteins, it binds directly near the 3'-end of the 23S rRNA, where it nucleates assembly of the 50S subunit. In Amoebophilus asiaticus (strain 5a2), this protein is Large ribosomal subunit protein uL3.